The following is a 462-amino-acid chain: Argininosuccinate lyase (462 aa).

Belongs to the lyase 1 family. Argininosuccinate lyase subfamily.

It is found in the cytoplasm. The catalysed reaction is 2-(N(omega)-L-arginino)succinate = fumarate + L-arginine. The protein operates within amino-acid biosynthesis; L-arginine biosynthesis; L-arginine from L-ornithine and carbamoyl phosphate: step 3/3. This chain is Argininosuccinate lyase, found in Chloroflexus aggregans (strain MD-66 / DSM 9485).